The chain runs to 3268 residues: E3 ubiquitin-protein ligase TOM1 (3268 aa).

The residue at position 1890 (Ser-1890) is a Phosphoserine. 2 disordered regions span residues 1941–2023 (VFSD…EDDA) and 2038–2083 (GYDV…MGDS). The span at 1942-1955 (FSDEDDDMGEEDAD) shows a compositional bias: acidic residues. The span at 1967-1976 (SSEMQSSTAD) shows a compositional bias: polar residues. 3 stretches are compositionally biased toward acidic residues: residues 1978–1988 (TDVDYEVDDAD), 2042–2053 (DLSDYDVDESDW), and 2063–2074 (SDEDSESSEDEP). Thr-2096 is subject to Phosphothreonine. Phosphoserine is present on residues Ser-2119, Ser-2376, Ser-2406, and Ser-2418. Residues 2416 to 2426 (DVSNNDEEVEN) show a composition bias toward acidic residues. The segment at 2416–2443 (DVSNNDEEVENGLDHGNSNDRNNADPEK) is disordered. The HECT domain maps to 2932–3268 (TNDEIKNSKL…NEGHEGFGLA (337 aa)). Cys-3235 serves as the catalytic Glycyl thioester intermediate.

The protein belongs to the UPL family. TOM1/PTR1 subfamily. In terms of assembly, interacts with the ADA3/NGG1 subunit of the SAGA complex. Interacts with KRR1.

It localises to the nucleus. The protein localises to the nucleolus. The catalysed reaction is S-ubiquitinyl-[E2 ubiquitin-conjugating enzyme]-L-cysteine + [acceptor protein]-L-lysine = [E2 ubiquitin-conjugating enzyme]-L-cysteine + N(6)-ubiquitinyl-[acceptor protein]-L-lysine.. The protein operates within protein modification; protein ubiquitination. In terms of biological role, probable ubiquitin ligase protein involved in many cellular processes, such as transcription regulation, maintenance of nuclear structure, cell cycle, mRNA export and rRNA maturation. E3 ubiquitin ligase proteins mediate ubiquitination and subsequent proteasomal degradation of target proteins. Involved in transcription regulation by interacting, and probably mediating, ubiquitination of some subunit of the SAGA complex. Required for SPT7 ubiquitination. Participates in mRNA export from the nucleus by regulating the transport of hnRNP proteins. Required for the shuttling of hnRNP protein NAB2, probably by mediating ubiquitination of a protein associated with NAB2. Also required for full induction of the general stress and heat-shock responses. Involved in 18S rRNA maturation by affecting several early steps in the rRNA processing pathway. The sequence is that of E3 ubiquitin-protein ligase TOM1 (TOM1) from Saccharomyces cerevisiae (strain ATCC 204508 / S288c) (Baker's yeast).